Consider the following 530-residue polypeptide: MPSIKRALISLSDKTGAVEFAQTLHKLGVEILSTGGTAKLLADAGVPVIEVADYTGFPEMLDGRVKTLHPKIHGGILGRRDLPEHVAKMEEHGIGNIDLVCVNLYPFAATIAKPNCTLEDAIENIDIGGPTMVRSAAKNWKHVAIVTDPADFPAIAAEMEANNGALSDKTRFNLSRKAFSHTAQYDGMISNYLTSLSDDVLSGTPEIGEFPSQFNQSWIKVQDMRYGENPHQRAAFYRDVYPAAGSLSAYKQLQGKELSYNNIADADAAWEAVKSFDAPACVIVKHANPCGVAVAADTLTAYKLAYATDTTSAFGGIIAFNREVDGETVKQITDNQFMEVLMAPKFTAEALEIAAAKKNVRVLQISLTTPLEAGANRFELKRVGGGLLVQTPDIYRLNRADLKVVSKRQLTEQEWNDLMFVWNVAKYVKSNAIVFGKGGQTYGIGAGQMSRVDSTRIAARKAQDANLDLNGACAASDAFFPFRDGVDVIAEQGIKAIIHPAGSMRDQEVFDAADEHGIAMVVTGVRHFRH.

Residues 1 to 147 form the MGS-like domain; that stretch reads MPSIKRALIS…KNWKHVAIVT (147 aa).

It belongs to the PurH family.

It carries out the reaction (6R)-10-formyltetrahydrofolate + 5-amino-1-(5-phospho-beta-D-ribosyl)imidazole-4-carboxamide = 5-formamido-1-(5-phospho-D-ribosyl)imidazole-4-carboxamide + (6S)-5,6,7,8-tetrahydrofolate. The enzyme catalyses IMP + H2O = 5-formamido-1-(5-phospho-D-ribosyl)imidazole-4-carboxamide. The protein operates within purine metabolism; IMP biosynthesis via de novo pathway; 5-formamido-1-(5-phospho-D-ribosyl)imidazole-4-carboxamide from 5-amino-1-(5-phospho-D-ribosyl)imidazole-4-carboxamide (10-formyl THF route): step 1/1. Its pathway is purine metabolism; IMP biosynthesis via de novo pathway; IMP from 5-formamido-1-(5-phospho-D-ribosyl)imidazole-4-carboxamide: step 1/1. The polypeptide is Bifunctional purine biosynthesis protein PurH (Neisseria meningitidis serogroup A / serotype 4A (strain DSM 15465 / Z2491)).